Reading from the N-terminus, the 94-residue chain is MPKSKVRKKNDFTISPVSRTPVKVKAGPSSVWFVALFVGLMLIGLIWLLVFQLAATNPVDAPGMLQWMADLGPWNYAIAFAFMITGLLLTMRWR.

Helical transmembrane passes span 31–51 (VWFVALFVGLMLIGLIWLLVF) and 71–91 (LGPWNYAIAFAFMITGLLLTM).

The protein belongs to the CrgA family.

It is found in the cell membrane. Involved in cell division. The protein is Cell division protein CrgA of Mycobacterium sp. (strain JLS).